The primary structure comprises 472 residues: Probable sterol O-acyltransferase 2 (472 aa).

Position 12 is a phosphoserine (S12). 3 helical membrane passes run 61–81 (FTGF…MSFL), 111–131 (LAMS…ALGY), and 135–155 (YGLG…HCVL). N161 carries an N-linked (GlcNAc...) asparagine glycan. The chain crosses the membrane as a helical span at residues 170-190 (FILHSMVILMKLHSYNVVNGW). Residue N233 is glycosylated (N-linked (GlcNAc...) asparagine). The next 2 helical transmembrane spans lie at 262 to 282 (IHYL…LVII) and 317 to 337 (TVAF…WVIF). N-linked (GlcNAc...) asparagine glycosylation is present at N342. The FYXDWWN motif signature appears at 355–361 (FYDDWWN). H409 is an active-site residue. A helical membrane pass occupies residues 452-472 (IAFWFSIIIGIALIAALYILF).

Belongs to the membrane-bound acyltransferase family. Sterol o-acyltransferase subfamily.

Its subcellular location is the endoplasmic reticulum membrane. Its function is as follows. Sterol O-acyltransferase that catalyzes the formation of stery esters. This is Probable sterol O-acyltransferase 2 (are2) from Schizosaccharomyces pombe (strain 972 / ATCC 24843) (Fission yeast).